A 487-amino-acid chain; its full sequence is MPN domain-containing protein (487 aa).

A disordered region spans residues 1–55 (MAAPESLSPGATAEEAPEEDEDDAEAEDPERGTGSGGRSGSLGGSGGGTAGPGMA). Position 2 is an N-acetylalanine (A2). A Phosphoserine modification is found at S8. Over residues 15–28 (EAPEEDEDDAEAED) the composition is skewed to acidic residues. A compositionally biased stretch (gly residues) spans 33–55 (TGSGGRSGSLGGSGGGTAGPGMA). One can recognise an RAMA domain in the interval 61-156 (TRRAVTLRVL…KYKAAWLRRH (96 aa)). DNA is bound by residues S113, S115, and W135. The tract at residues 163–217 (ATADESPTSEGEEEELLLEEEEEDVLAGVSSEDKGHRPPGKGSLEPEATPPGKRM) is disordered. Phosphoserine occurs at positions 168 and 171. A compositionally biased stretch (acidic residues) spans 172-187 (EGEEEELLLEEEEEDV). Residues 258–393 (VAVSSNVLFL…PESKICPFWV (136 aa)) enclose the MPN domain. Zn(2+) contacts are provided by H335, H337, and D348. A JAMM motif motif is present at residues 335 to 348 (HSHPHSPAVPSLQD).

This sequence belongs to the peptidase M67 family. In terms of assembly, monomer. Mainly monomoric, but when binds to dsDNA, forms homotetramer assembled into two homodimers. May interact with histones; this interaction is facilitated by. Post-translationally, degraded following binding to N(6)-methyladenosine methylated DNA (m6A).

Probable protease. Acts as a sensor of N(6)-methyladenosine methylation on DNA (m6A): recognizes and binds m6A DNA, leading to its degradation. Binds only double strand DNA (dsDNA) in a sequence-independent manner. The sequence is that of MPN domain-containing protein from Mus musculus (Mouse).